A 339-amino-acid chain; its full sequence is Ketol-acid reductoisomerase (NADP(+)) (339 aa).

In terms of domain architecture, KARI N-terminal Rossmann spans 1-182; it reads MRVYYDRDAD…GGGRAGIIET (182 aa). NADP(+) contacts are provided by residues 24 to 27, arginine 48, serine 51, threonine 53, and 83 to 86; these read YGSQ and DELQ. Histidine 108 is a catalytic residue. Glycine 134 is a binding site for NADP(+). The region spanning 183–328 is the KARI C-terminal knotted domain; it reads TFREECETDL…AKLRAMMPWI (146 aa). The Mg(2+) site is built by aspartate 191, glutamate 195, glutamate 227, and glutamate 231. Serine 252 is a substrate binding site.

It belongs to the ketol-acid reductoisomerase family. It depends on Mg(2+) as a cofactor.

It catalyses the reaction (2R)-2,3-dihydroxy-3-methylbutanoate + NADP(+) = (2S)-2-acetolactate + NADPH + H(+). The catalysed reaction is (2R,3R)-2,3-dihydroxy-3-methylpentanoate + NADP(+) = (S)-2-ethyl-2-hydroxy-3-oxobutanoate + NADPH + H(+). It functions in the pathway amino-acid biosynthesis; L-isoleucine biosynthesis; L-isoleucine from 2-oxobutanoate: step 2/4. It participates in amino-acid biosynthesis; L-valine biosynthesis; L-valine from pyruvate: step 2/4. Its function is as follows. Involved in the biosynthesis of branched-chain amino acids (BCAA). Catalyzes an alkyl-migration followed by a ketol-acid reduction of (S)-2-acetolactate (S2AL) to yield (R)-2,3-dihydroxy-isovalerate. In the isomerase reaction, S2AL is rearranged via a Mg-dependent methyl migration to produce 3-hydroxy-3-methyl-2-ketobutyrate (HMKB). In the reductase reaction, this 2-ketoacid undergoes a metal-dependent reduction by NADPH to yield (R)-2,3-dihydroxy-isovalerate. This Methylocella silvestris (strain DSM 15510 / CIP 108128 / LMG 27833 / NCIMB 13906 / BL2) protein is Ketol-acid reductoisomerase (NADP(+)).